Consider the following 501-residue polypeptide: Glutathione gamma-glutamylcysteinyltransferase 1 (501 aa).

Residues Met-1–Arg-221 enclose the Peptidase C83 domain. Active-site residues include Cys-56, His-162, and Asp-180.

Belongs to the phytochelatin synthase family. As to expression, expressed in roots, nodules and leaves.

It catalyses the reaction [Glu(-Cys)](n)-Gly + glutathione + H(+) = [Glu(-Cys)](n+1)-Gly + glycine. Its activity is regulated as follows. Requires cadmium for activity. Also activated in vitro by Zn(2+), Cu(2+), Fe(2+) or Fe(3+) ions, but not by Co(2+) or Ni(2+) ions. Functionally, involved in the synthesis of phytochelatins (PC) and homophytochelatins (hPC), the heavy-metal-binding peptides of plants. The sequence is that of Glutathione gamma-glutamylcysteinyltransferase 1 (PCS1) from Lotus japonicus (Lotus corniculatus var. japonicus).